We begin with the raw amino-acid sequence, 367 residues long: B2 bradykinin receptor (367 aa).

The Extracellular portion of the chain corresponds to 1–36 (MLNITSQVLAPALNGSVSQSSGCPNTEWSGWLNVIQ). N-linked (GlcNAc...) asparagine glycans are attached at residues asparagine 3 and asparagine 14. The chain crosses the membrane as a helical span at residues 37 to 60 (APFLWVLFVLATLENLFVLSVFCL). Over 61-69 (HKSSCTVAE) the chain is Cytoplasmic. A helical transmembrane segment spans residues 70–94 (VYLGNLAAADLILACGLPFWAVTIA). Topologically, residues 95–107 (NHFDWLFGEALCR) are extracellular. Cysteine 106 and cysteine 187 are joined by a disulfide. A helical transmembrane segment spans residues 108-129 (VVNTMIYMNLYSSICFLMLVSI). Residues 130 to 151 (DRYLALVKTMSIGRMRRVRWAK) are Cytoplasmic-facing. Tyrosine 132 is subject to Phosphotyrosine. A helical membrane pass occupies residues 152-174 (LYSLVIWGCTLLLSSPMLVFRTM). The Extracellular portion of the chain corresponds to 175 to 197 (KDYRDEGYNVTACIIDYPSRSWE). Asparagine 183 carries an N-linked (GlcNAc...) asparagine glycan. Residues 198 to 224 (VFTNVLLNLVGFLLPLSVITFCTVQIL) form a helical membrane-spanning segment. The Cytoplasmic portion of the chain corresponds to 225–243 (QVLRNNEMQKFKEIQTERR). Residues 244–268 (ATVLVLAVLLLFVVCWLPFQVSTFL) form a helical membrane-spanning segment. The Extracellular portion of the chain corresponds to 269–287 (DTLLKLGVLSSCWDEHVID). A helical transmembrane segment spans residues 288-311 (VITQVGSFMGYSNSCLNPLVYVIV). Topologically, residues 312 to 367 (GKRFRKKSREVYRAACPKAGCVLEPVQAESSMGTLRTSISVERQIHKLPEWTRSSQ) are cytoplasmic. The residue at position 323 (tyrosine 323) is a Phosphotyrosine. The S-palmitoyl cysteine moiety is linked to residue cysteine 327. At serine 342 the chain carries Phosphoserine. Position 345 is a phosphothreonine (threonine 345). Residues serine 349 and serine 351 each carry the phosphoserine; by GRK6 modification.

The protein belongs to the G-protein coupled receptor 1 family. Bradykinin receptor subfamily. BDKRB2 sub-subfamily. In terms of assembly, forms a complex with PECAM1 and GNAQ. Interacts with PECAM1.

The protein localises to the cell membrane. Receptor for bradykinin. It is associated with G proteins that activate a phosphatidylinositol-calcium second messenger system. This chain is B2 bradykinin receptor (BDKRB2), found in Oryctolagus cuniculus (Rabbit).